A 398-amino-acid chain; its full sequence is S-adenosylmethionine synthase (398 aa).

ATP is bound at residue H16. Residue D18 participates in Mg(2+) binding. Residue E44 participates in K(+) binding. L-methionine is bound by residues E57 and Q100. Residues 100–110 (QSPDIAQGVNE) form a flexible loop region. Residues 175 to 177 (DAK), 242 to 243 (RF), D251, 257 to 258 (RK), A274, and K278 each bind ATP. An L-methionine-binding site is contributed by D251. K282 contributes to the L-methionine binding site.

Belongs to the AdoMet synthase family. In terms of assembly, homotetramer; dimer of dimers. Mg(2+) is required as a cofactor. The cofactor is K(+).

It is found in the cytoplasm. It carries out the reaction L-methionine + ATP + H2O = S-adenosyl-L-methionine + phosphate + diphosphate. It functions in the pathway amino-acid biosynthesis; S-adenosyl-L-methionine biosynthesis; S-adenosyl-L-methionine from L-methionine: step 1/1. Its function is as follows. Catalyzes the formation of S-adenosylmethionine (AdoMet) from methionine and ATP. The overall synthetic reaction is composed of two sequential steps, AdoMet formation and the subsequent tripolyphosphate hydrolysis which occurs prior to release of AdoMet from the enzyme. In Streptococcus agalactiae serotype III (strain NEM316), this protein is S-adenosylmethionine synthase.